Consider the following 478-residue polypeptide: uncharacterized protein (478 aa).

An RRM domain is found at 5 to 85 (KRIYVGGLSS…SKLRIEEARP (81 aa)). Serine 207 and serine 308 each carry phosphoserine.

Its subcellular location is the nucleus. The protein localises to the nucleolus. This is an uncharacterized protein from Schizosaccharomyces pombe (strain 972 / ATCC 24843) (Fission yeast).